Reading from the N-terminus, the 702-residue chain is Vacuolar protein sorting-associated protein 52 homolog (702 aa).

The stretch at 505–535 (KEMGAKMEAVLENSEDSIEQLLTRMSAMQQT) forms a coiled coil.

It belongs to the VPS52 family. As to quaternary structure, component of the Golgi-associated retrograde protein (GARP) complex, also called VFT (VPS fifty-three) complex, composed of vps-51, vps-52, vps-53 and vps-54. Within the complex interacts with vps-53 and vps-54. Interacts with the small GTPases rab-6.1 and rab-6.2. As to expression, ubiquitously expressed, with particularly strong expression in neuronal cells. Specifically expressed in head and tail neurons and in the pharynx and ventral cord motor neurons.

Its subcellular location is the golgi apparatus. It is found in the trans-Golgi network. It localises to the perikaryon. The protein resides in the cytoplasm. The protein localises to the perinuclear region. Acts as a component of the GARP complex that is involved in retrograde transport from early and late endosomes to the trans-Golgi network (TGN). The GARP complex facilitates tethering as well as SNARE complex assembly at the Golgi. Plays a role in the trafficking of cargo to dense-core vesicles, probably through association with the EARP-interacting protein eipr-1. Important for neuronal function. The chain is Vacuolar protein sorting-associated protein 52 homolog from Caenorhabditis elegans.